Here is a 245-residue protein sequence, read N- to C-terminus: 1-(5-phosphoribosyl)-5-[(5-phosphoribosylamino)methylideneamino] imidazole-4-carboxamide isomerase (245 aa).

Catalysis depends on D7, which acts as the Proton acceptor. The Proton donor role is filled by D129.

This sequence belongs to the HisA/HisF family.

The protein localises to the cytoplasm. The catalysed reaction is 1-(5-phospho-beta-D-ribosyl)-5-[(5-phospho-beta-D-ribosylamino)methylideneamino]imidazole-4-carboxamide = 5-[(5-phospho-1-deoxy-D-ribulos-1-ylimino)methylamino]-1-(5-phospho-beta-D-ribosyl)imidazole-4-carboxamide. Its pathway is amino-acid biosynthesis; L-histidine biosynthesis; L-histidine from 5-phospho-alpha-D-ribose 1-diphosphate: step 4/9. In Shewanella sp. (strain MR-4), this protein is 1-(5-phosphoribosyl)-5-[(5-phosphoribosylamino)methylideneamino] imidazole-4-carboxamide isomerase.